The following is a 177-amino-acid chain: Large ribosomal subunit protein uL6 (177 aa).

This sequence belongs to the universal ribosomal protein uL6 family. Part of the 50S ribosomal subunit.

This protein binds to the 23S rRNA, and is important in its secondary structure. It is located near the subunit interface in the base of the L7/L12 stalk, and near the tRNA binding site of the peptidyltransferase center. The chain is Large ribosomal subunit protein uL6 from Bartonella quintana (strain Toulouse) (Rochalimaea quintana).